Here is a 461-residue protein sequence, read N- to C-terminus: Diaboline synthase (461 aa).

Catalysis depends on proton acceptor residues His-185 and Asp-400.

It belongs to the plant acyltransferase family. In terms of assembly, monomer.

The protein localises to the cytoplasm. It catalyses the reaction 17,18-epoxy-17-hydroxycur-19-ene + acetyl-CoA = diaboline + CoA. It functions in the pathway alkaloid biosynthesis. Acetyltransferase involved in the biosynthesis of curare monoterpene indole alkaloids (MIAs), natural products such as diaboline, a pharmacologically active compound used to regulate blood pressure. Curare alkaloids act as animal glycine receptor antagonists. Catalyzes the conversion of 17,18-epoxy-17-hydroxycur-19-ene (Wieland-Gumlich aldehyde) to diaboline. This chain is Diaboline synthase, found in Strychnos sp.